The primary structure comprises 576 residues: Adenine deaminase 2 (576 aa).

It belongs to the metallo-dependent hydrolases superfamily. Adenine deaminase family. The cofactor is Mn(2+).

The catalysed reaction is adenine + H2O + H(+) = hypoxanthine + NH4(+). The chain is Adenine deaminase 2 from Desulfotalea psychrophila (strain LSv54 / DSM 12343).